A 290-amino-acid chain; its full sequence is Protease HtpX (290 aa).

2 helical membrane passes run 4–24 (IFLF…TLKL) and 36–56 (GSLL…SLFI). His-142 provides a ligand contact to Zn(2+). Glu-143 is a catalytic residue. Residue His-146 participates in Zn(2+) binding. 2 consecutive transmembrane segments (helical) span residues 150 to 170 (GDMV…MFFA) and 193 to 213 (FVAT…IVMW). A Zn(2+)-binding site is contributed by Glu-219.

The protein belongs to the peptidase M48B family. Zn(2+) is required as a cofactor.

Its subcellular location is the cell inner membrane. The chain is Protease HtpX from Stutzerimonas stutzeri (strain A1501) (Pseudomonas stutzeri).